The following is a 245-amino-acid chain: Enolase-phosphatase E1 (245 aa).

Belongs to the HAD-like hydrolase superfamily. MasA/MtnC family. Monomer. Mg(2+) serves as cofactor.

The catalysed reaction is 5-methylsulfanyl-2,3-dioxopentyl phosphate + H2O = 1,2-dihydroxy-5-(methylsulfanyl)pent-1-en-3-one + phosphate. It functions in the pathway amino-acid biosynthesis; L-methionine biosynthesis via salvage pathway; L-methionine from S-methyl-5-thio-alpha-D-ribose 1-phosphate: step 3/6. Its pathway is amino-acid biosynthesis; L-methionine biosynthesis via salvage pathway; L-methionine from S-methyl-5-thio-alpha-D-ribose 1-phosphate: step 4/6. Bifunctional enzyme that catalyzes the enolization of 2,3-diketo-5-methylthiopentyl-1-phosphate (DK-MTP-1-P) into the intermediate 2-hydroxy-3-keto-5-methylthiopentenyl-1-phosphate (HK-MTPenyl-1-P), which is then dephosphorylated to form the acireductone 1,2-dihydroxy-3-keto-5-methylthiopentene (DHK-MTPene). This Prochlorococcus marinus (strain MIT 9313) protein is Enolase-phosphatase E1.